Here is a 308-residue protein sequence, read N- to C-terminus: Homoserine kinase (308 aa).

94-104 (PLARGLGSSAT) serves as a coordination point for ATP.

Belongs to the GHMP kinase family. Homoserine kinase subfamily.

It is found in the cytoplasm. The enzyme catalyses L-homoserine + ATP = O-phospho-L-homoserine + ADP + H(+). It functions in the pathway amino-acid biosynthesis; L-threonine biosynthesis; L-threonine from L-aspartate: step 4/5. Its function is as follows. Catalyzes the ATP-dependent phosphorylation of L-homoserine to L-homoserine phosphate. This Crocosphaera subtropica (strain ATCC 51142 / BH68) (Cyanothece sp. (strain ATCC 51142)) protein is Homoserine kinase.